Here is a 350-residue protein sequence, read N- to C-terminus: tRNA uridine(34) hydroxylase (350 aa).

Positions 146–240 (DDPDALFIDM…YARKAREQGL (95 aa)) constitute a Rhodanese domain. Cys200 acts as the Cysteine persulfide intermediate in catalysis.

Belongs to the TrhO family.

It carries out the reaction uridine(34) in tRNA + AH2 + O2 = 5-hydroxyuridine(34) in tRNA + A + H2O. Its function is as follows. Catalyzes oxygen-dependent 5-hydroxyuridine (ho5U) modification at position 34 in tRNAs, the first step in 5-carboxymethoxyuridine (cmo5U) biosynthesis. May be part of an alternate pathway, which is able to bypass cmo5U biogenesis in a subset of tRNAs under aerobic conditions. This chain is tRNA uridine(34) hydroxylase, found in Escherichia coli O127:H6 (strain E2348/69 / EPEC).